The sequence spans 692 residues: Paramyosin (692 aa).

The nonhelical region stretch occupies residues 1 to 15 (MNKKRDSELAKLRKL). Positions 16–692 (LEDVHIESEE…DHRVKELLLQ (677 aa)) form a coiled coil. The disordered stretch occupies residues 26-57 (TAHHLRQKHQAAIQEMQDQLDQLQKAKNKSDK).

Belongs to the paramyosin family. As to quaternary structure, homodimer.

It is found in the cytoplasm. The protein localises to the myofibril. Functionally, paramyosin is a major structural component of many thick filaments isolated from invertebrate muscles. The sequence is that of Paramyosin from Dermatophagoides farinae (American house dust mite).